Consider the following 141-residue polypeptide: Nucleoside diphosphate kinase (141 aa).

6 residues coordinate ATP: K11, Y59, R87, T93, R104, and N114. H117 (pros-phosphohistidine intermediate) is an active-site residue.

It belongs to the NDK family. Homotetramer. The cofactor is Mg(2+).

The protein resides in the cytoplasm. It carries out the reaction a 2'-deoxyribonucleoside 5'-diphosphate + ATP = a 2'-deoxyribonucleoside 5'-triphosphate + ADP. The catalysed reaction is a ribonucleoside 5'-diphosphate + ATP = a ribonucleoside 5'-triphosphate + ADP. Functionally, major role in the synthesis of nucleoside triphosphates other than ATP. The ATP gamma phosphate is transferred to the NDP beta phosphate via a ping-pong mechanism, using a phosphorylated active-site intermediate. This is Nucleoside diphosphate kinase from Orientia tsutsugamushi (strain Boryong) (Rickettsia tsutsugamushi).